The chain runs to 778 residues: MSWNRRSFLGALGVTCLAGAGMVPIVRPRTAAAADEFDLLRERWCSLVTGSGYDPDVEPFKSRLAALGAEAEQYLTTLAPGETSLWPDLPLDTSTWNMTLSARRLRTMAVAYLVPGTGHTGNSAMAEAAVTAFDELTTRFYAPPHWWGNWWDWLIGTPQALNDFCALLYEQLGPELIDRYVQRVDHYVDPGAIDRTTGANRGWLCEVTAVRGVLGKSPEMMAKARDGLSPIMVYVTDGDGFYRDGSFIQHEYYAYTGSYGISLLQSVSGLFALLAGSTWEIVDPNRQVLFDSIENSFAPFVYNGLLMDAVAGRVISREAEHDHWRGHLLAASVLRMAEAGSPEEAKRWRGIVKGWLLRESEPRYMGDQTLTMAAVADAQAVLDDPTIEPLPEPVEHRIFAAMDQAVHRRPTWAFSISMRSVRTAFYETINGENLKGWHTGVGMTYWWGADFGNDHYTDGFWPTADPYRLPGTTVSRKPLEDGVGNNVLPTEAWAGGTTDGEFAAVGQSIQALESTLRGRKSWFCLDDAVVCLGAGITCADGYAVDTTVDQRNLGENGVHDFRLNGIPSPTSGTWSLTVPNARWAHLEGFGGYVFPGGARVSAIRETRTGSWYDINVGGPRDELRRRYVTVYLDHGVDPVDASYVYLVMPGATRQETIRRAADRRWLRVLANTADRQAISVPSLGFVGANFFAPGTVDALTVDQPCSVLVRVADGRATICVSDPRQDGSTVRVTWNRPVASVVSSDPTVRVVEAGERLVLDVTVEETAGMTQRAVVALA.

A signal peptide (tat-type signal) is located at residues 1-33; sequence MSWNRRSFLGALGVTCLAGAGMVPIVRPRTAAA. Catalysis depends on residues asparagine 200, histidine 250, and tyrosine 259.

This sequence belongs to the polysaccharide lyase 8 family. In terms of processing, predicted to be exported by the Tat system. The position of the signal peptide cleavage has not been experimentally proven.

The enzyme catalyses [hyaluronan](n) = n 3-(4-deoxy-beta-D-gluc-4-enuronosyl)-N-acetyl-D-glucosamine + H2O. With respect to regulation, is salt-dependent and is active over a wide range of NaCl concentrations. Activity is slightly promoted by Ni(2+), and inhibited by most of the tested metal ions, including Li(+), K(+), Ba(2+), Mg(2+), Zn(2+), Ca(2+), Mn(2+) and Al(3+). Functionally, degrades hyaluronic acid into unsaturated disaccharides as the end products. Exhibits very low activity against various types of chondroitin sulfate variants. The sequence is that of Hyaluronate lyase from Thermasporomyces composti.